Reading from the N-terminus, the 263-residue chain is 3-methyl-2-oxobutanoate hydroxymethyltransferase (263 aa).

Mg(2+) contacts are provided by Asp-44 and Asp-83. 3-methyl-2-oxobutanoate contacts are provided by residues 44–45 (DS), Asp-83, and Lys-113. Glu-115 provides a ligand contact to Mg(2+). Glu-183 (proton acceptor) is an active-site residue.

Belongs to the PanB family. Homodecamer; pentamer of dimers. The cofactor is Mg(2+).

The protein resides in the cytoplasm. It carries out the reaction 3-methyl-2-oxobutanoate + (6R)-5,10-methylene-5,6,7,8-tetrahydrofolate + H2O = 2-dehydropantoate + (6S)-5,6,7,8-tetrahydrofolate. It functions in the pathway cofactor biosynthesis; (R)-pantothenate biosynthesis; (R)-pantoate from 3-methyl-2-oxobutanoate: step 1/2. In terms of biological role, catalyzes the reversible reaction in which hydroxymethyl group from 5,10-methylenetetrahydrofolate is transferred onto alpha-ketoisovalerate to form ketopantoate. The protein is 3-methyl-2-oxobutanoate hydroxymethyltransferase of Trichodesmium erythraeum (strain IMS101).